A 428-amino-acid polypeptide reads, in one-letter code: E3 ubiquitin-protein ligase RNF128 (428 aa).

The N-terminal stretch at 1-38 is a signal peptide; the sequence is MGPPPGAGVSCRGGCGFSRLLAWCFLLALSPQAPGSRG. 3 N-linked (GlcNAc...) asparagine glycosylation sites follow: N48, N59, and N101. The region spanning 75 to 183 is the PA domain; that stretch reads SPLEPVAGVL…LKGTKILQSI (109 aa). The helical transmembrane segment at 208 to 228 threads the bilayer; that stretch reads IFFVSVSFFIITAATVGYFIF. An RING-type; atypical zinc finger spans residues 277–318; the sequence is CAVCIELYKPNDLVRILTCNHIFHKTCVDPWLLEHRTCPMCK. The disordered stretch occupies residues 346 to 428; that stretch reads ISNSASSHEE…QETAVREIKS (83 aa). Residues 360–371 show a composition bias toward polar residues; it reads ETASSGYASVQG.

Auto-ubiquitinated. Controls the development of T-cell clonal anergy by ubiquitination.

The protein localises to the cytoplasm. It is found in the endomembrane system. The protein resides in the cytoskeleton. Its subcellular location is the perinuclear region. It carries out the reaction S-ubiquitinyl-[E2 ubiquitin-conjugating enzyme]-L-cysteine + [acceptor protein]-L-lysine = [E2 ubiquitin-conjugating enzyme]-L-cysteine + N(6)-ubiquitinyl-[acceptor protein]-L-lysine.. It participates in protein modification; protein ubiquitination. Functionally, E3 ubiquitin-protein ligase that catalyzes 'Lys-27', 'Lys-48'- or 'Lys-63'-linked polyubiquitin chains formation and plays a role in different biological processes such as modulation of immune response, cytoskeletal dynamics or protein homeostasis. Inhibits IL2 and IL4 transcription, thereby playing an important role in the induction of the anergic phenotype, a long-term stable state of T-lymphocyte unresponsiveness to antigenic stimulation associated with the blockade of interleukin production. Ubiquitinates ARPC5 with 'Lys-48' linkages and COR1A with 'Lys-63' linkages leading to their degradation, down-regulation of these cytoskeletal components results in impaired lamellipodium formation and reduced accumulation of F-actin at the immunological synapse. Functions in the patterning of the dorsal ectoderm; sensitizes ectoderm to respond to neural-inducing signals. Plays a positive role in innate immune response by promoting 'Lys-63'-linked ubiquitination of TBK1 after RNA- or DNA-virus infection. Regulates alveolar macrophage activation and neutrophil infiltration by interacting with TLR4, targeting it for degradation, and inhibiting NF-kappa-B activation, hence decreasing pro-inflammatory cytokines. Negatively regulates the IL-3/STAT5 signaling pathway by facilitating 'Lys-27'-linked polyubiquitination of IL3RA leading to its degradation via lysosomal pathway. Directly regulates the N-glycosylation process in the endoplasmic reticulum by targeting the glycosyl-transferase RPN1 for ubiquitination and degradation. Other substrates targeted for degradation by RNF128 include transmembrane proteins CD40L, CD83 or the tetraspanin CD151. The protein is E3 ubiquitin-protein ligase RNF128 (RNF128) of Homo sapiens (Human).